We begin with the raw amino-acid sequence, 175 residues long: Disulfide bond formation protein B (175 aa).

The Cytoplasmic portion of the chain corresponds to 1 to 13 (MTALTRFAHSRSS). Residues 14–30 (WFLLTGTAIGLEAAALY) traverse the membrane as a helical segment. Topologically, residues 31-48 (FQYVMKLDPCVMCIYQRL) are periplasmic. Cysteines 40 and 43 form a disulfide. A helical transmembrane segment spans residues 49 to 64 (AVFGILVAGLIGMTAP). Residues 65-71 (KYRLIRI) are Cytoplasmic-facing. Residues 72–89 (LGASCWAVSATWGLKLAL) traverse the membrane as a helical segment. Over 90 to 144 (ALVNMQNNPSPFATCSFLPEFPTWMPLHEWFPAVMLPTGMCTDLPWRFMDVTMAE) the chain is Periplasmic. A disulfide bond links Cys104 and Cys130. A helical transmembrane segment spans residues 145–163 (WMVVVFSTFLVIWLLFIVP). Residues 164–175 (ILSGSTKPSLYK) are Cytoplasmic-facing.

Belongs to the DsbB family.

Its subcellular location is the cell inner membrane. Required for disulfide bond formation in some periplasmic proteins. Acts by oxidizing the DsbA protein. In Shewanella sp. (strain W3-18-1), this protein is Disulfide bond formation protein B.